Reading from the N-terminus, the 502-residue chain is Maturase K (502 aa).

The protein belongs to the intron maturase 2 family. MatK subfamily.

It is found in the plastid. The protein resides in the chloroplast. Functionally, usually encoded in the trnK tRNA gene intron. Probably assists in splicing its own and other chloroplast group II introns. The sequence is that of Maturase K from Vaccinium vitis-idaea (Mountain cranberry).